The following is a 270-amino-acid chain: Bis(5'-nucleosyl)-tetraphosphatase, symmetrical (270 aa).

This sequence belongs to the Ap4A hydrolase family.

The catalysed reaction is P(1),P(4)-bis(5'-adenosyl) tetraphosphate + H2O = 2 ADP + 2 H(+). Hydrolyzes diadenosine 5',5'''-P1,P4-tetraphosphate to yield ADP. The chain is Bis(5'-nucleosyl)-tetraphosphatase, symmetrical from Actinobacillus pleuropneumoniae serotype 3 (strain JL03).